Consider the following 367-residue polypeptide: Alcohol dehydrogenase 2 (367 aa).

The Zn(2+) site is built by Cys-48, His-74, Cys-107, Cys-110, Cys-113, Cys-121, and Cys-163. NAD(+) is bound by residues 187-193 (GAGGGLG), Asp-212, Lys-216, 286-288 (VGI), and Arg-361.

It belongs to the zinc-containing alcohol dehydrogenase family. In terms of assembly, homotetramer. Requires Zn(2+) as cofactor.

Its subcellular location is the cytoplasm. It catalyses the reaction a primary alcohol + NAD(+) = an aldehyde + NADH + H(+). It carries out the reaction a secondary alcohol + NAD(+) = a ketone + NADH + H(+). The chain is Alcohol dehydrogenase 2 (alcB) from Emericella nidulans (strain FGSC A4 / ATCC 38163 / CBS 112.46 / NRRL 194 / M139) (Aspergillus nidulans).